The primary structure comprises 1141 residues: DNA-directed RNA polymerase subunit beta (1141 aa).

The segment at 1117-1141 (GINISREEPPGQLDDTPDTFSRGGM) is disordered.

The protein belongs to the RNA polymerase beta chain family. In terms of assembly, the RNAP catalytic core consists of 2 alpha, 1 beta, 1 beta' and 1 omega subunit. When a sigma factor is associated with the core the holoenzyme is formed, which can initiate transcription.

The catalysed reaction is RNA(n) + a ribonucleoside 5'-triphosphate = RNA(n+1) + diphosphate. In terms of biological role, DNA-dependent RNA polymerase catalyzes the transcription of DNA into RNA using the four ribonucleoside triphosphates as substrates. This Rubrobacter xylanophilus (strain DSM 9941 / JCM 11954 / NBRC 16129 / PRD-1) protein is DNA-directed RNA polymerase subunit beta.